The chain runs to 1215 residues: von Willebrand factor A domain-containing protein 5B1 (1215 aa).

Positions 1–18 (MPGLLNCLTGAALPLMES) are cleaved as a signal peptide. The VIT domain occupies 19–141 (DVTSYVSGYA…NVTVFISTSS (123 aa)). N132 carries an N-linked (GlcNAc...) asparagine glycan. The VWFA domain occupies 353-532 (EFIFLIDRSN…KAMAPVLSDV (180 aa)). The interval 595–674 (SVFYPSQDEG…DPTGTARRYP (80 aa)) is disordered. Composition is skewed to polar residues over residues 608 to 621 (GSGN…QGQT) and 646 to 667 (YSTN…SDPT). Y879 carries the post-translational modification Phosphotyrosine. 3 disordered regions span residues 934–953 (GSSA…SSAA), 964–999 (QDSP…APSS), and 1100–1121 (SPQD…SLKS). Polar residues-rich tracts occupy residues 964–975 (QDSPTSTFNKTP), 990–999 (QNLSASAPSS), and 1100–1112 (SPQD…SSPP).

It localises to the secreted. This is von Willebrand factor A domain-containing protein 5B1 (Vwa5b1) from Mus musculus (Mouse).